Reading from the N-terminus, the 183-residue chain is ATP-dependent protease subunit HslV (183 aa).

T12 is an active-site residue. 3 residues coordinate Na(+): A166, C169, and T172.

The protein belongs to the peptidase T1B family. HslV subfamily. A double ring-shaped homohexamer of HslV is capped on each side by a ring-shaped HslU homohexamer. The assembly of the HslU/HslV complex is dependent on binding of ATP.

The protein localises to the cytoplasm. The enzyme catalyses ATP-dependent cleavage of peptide bonds with broad specificity.. Its activity is regulated as follows. Allosterically activated by HslU binding. Functionally, protease subunit of a proteasome-like degradation complex believed to be a general protein degrading machinery. This is ATP-dependent protease subunit HslV from Afipia carboxidovorans (strain ATCC 49405 / DSM 1227 / KCTC 32145 / OM5) (Oligotropha carboxidovorans).